The sequence spans 277 residues: Thymidylate synthase (277 aa).

Residue R21 participates in dUMP binding. Position 51 (H51) interacts with (6R)-5,10-methylene-5,6,7,8-tetrahydrofolate. Position 126-127 (126-127) interacts with dUMP; it reads RR. C159 functions as the Nucleophile in the catalytic mechanism. DUMP-binding positions include 179–182, N190, and 220–222; these read RSAD and HLY. D182 is a binding site for (6R)-5,10-methylene-5,6,7,8-tetrahydrofolate. Position 276 (A276) interacts with (6R)-5,10-methylene-5,6,7,8-tetrahydrofolate.

Belongs to the thymidylate synthase family. Bacterial-type ThyA subfamily. In terms of assembly, homodimer.

The protein resides in the cytoplasm. The catalysed reaction is dUMP + (6R)-5,10-methylene-5,6,7,8-tetrahydrofolate = 7,8-dihydrofolate + dTMP. The protein operates within pyrimidine metabolism; dTTP biosynthesis. Its function is as follows. Catalyzes the reductive methylation of 2'-deoxyuridine-5'-monophosphate (dUMP) to 2'-deoxythymidine-5'-monophosphate (dTMP) while utilizing 5,10-methylenetetrahydrofolate (mTHF) as the methyl donor and reductant in the reaction, yielding dihydrofolate (DHF) as a by-product. This enzymatic reaction provides an intracellular de novo source of dTMP, an essential precursor for DNA biosynthesis. This chain is Thymidylate synthase, found in Thioalkalivibrio sulfidiphilus (strain HL-EbGR7).